The sequence spans 194 residues: uncharacterized protein (194 aa).

The tract at residues 62 to 93 is disordered; it reads GGAGRRTSKAQRVHPQPSHQRQPPPPQHPGPY.

In terms of tissue distribution, expressed most abundantly in the brain at protein level. Present in cortex, cerebellum and midbrain. Found in neurons. Elevated expressions detected in Alzheimer brain samples. Also expressed in testis.

The protein resides in the cytoplasm. This is an uncharacterized protein from Homo sapiens (Human).